Consider the following 151-residue polypeptide: Large ribosomal subunit protein bL9 (151 aa).

The protein belongs to the bacterial ribosomal protein bL9 family.

In terms of biological role, binds to the 23S rRNA. This is Large ribosomal subunit protein bL9 from Nitrosospira multiformis (strain ATCC 25196 / NCIMB 11849 / C 71).